The sequence spans 526 residues: Neutrophil cytosol factor 2 (526 aa).

TPR repeat units follow at residues 37–70, 71–104, and 121–154; these read SRIC…DKHL, AVAY…LRGN, and CEVL…KSEP. Threonine 233 carries the phosphothreonine modification. In terms of domain architecture, SH3 1 spans 240–299; it reads LEGEAHRVLFGFVPETKEELQVMPGNIVFVLKKGNDNWATVMFNGQKGLVPCNYLEPVEL. Residues 303–315 show a composition bias toward low complexity; sequence PQQQPQEESSPQS. The disordered stretch occupies residues 303 to 346; it reads PQQQPQEESSPQSDIPAPPSSKAPGRPQLSPGQKQKEEPKEVKL. A compositionally biased stretch (basic and acidic residues) spans 336–345; sequence KQKEEPKEVK. Residues 351 to 429 form the PB1 domain; the sequence is PYTLKVHYKY…YCLTLWCENT (79 aa). A Phosphoserine modification is found at serine 399. The segment at 433 to 458 is disordered; it reads QGFPDEPKESEKADANNQTTEPQLKK. A compositionally biased stretch (basic and acidic residues) spans 437 to 446; it reads DEPKESEKAD. Residues 457 to 516 enclose the SH3 2 domain; it reads KKGSQVEALFSYEATQPEDLEFQEGDIILVLSKVNEEWLEGECKGKVGIFPKVFVEDCAT.

It belongs to the NCF2/NOXA1 family. Component of the phagocyte NADPH oxidase complex composed of an obligatory core heterodimer formed by the membrane proteins CYBA and CYBB and the cytosolic regulatory subunits NCF1/p47-phox, NCF2/p67-phox, NCF4/p40-phox and the small GTPase RAC1 or RAC2. Part of a cytosolic complex composed at least by NCF1, NCF2 and NCF4. Interacts with NCF4. Interacts (via the C-terminal SH3 domain) with NCF1 (via C-terminus). Interacts with SYTL1 and RAC1. May interact with NOXO1. Interacts with S100A8 and calprotectin (S100A8/9). Interacts with GBP7 (via GB1/RHD3-type G domain). Interacts with CYBB; the interaction is enhanced in the presence of GBP7.

Its subcellular location is the cytoplasm. Functionally, subunit of the phagocyte NADPH oxidase complex that mediates the transfer of electrons from cytosolic NADPH to O2 to produce the superoxide anion (O2(-)). In the activated complex, electrons are first transferred from NADPH to flavin adenine dinucleotide (FAD) and subsequently transferred via two heme molecules to molecular oxygen, producing superoxide through an outer-sphere reaction. Activation of the NADPH oxidase complex is initiated by the assembly of cytosolic subunits of the NADPH oxidase complex with the core NADPH oxidase complex to form a complex at the plasma membrane or phagosomal membrane. This activation process is initiated by phosphorylation dependent binding of the cytosolic NCF1/p47-phox subunit to the C-terminus of CYBA/p22-phox. The polypeptide is Neutrophil cytosol factor 2 (Homo sapiens (Human)).